The primary structure comprises 341 residues: Phenylalanine--tRNA ligase alpha subunit (341 aa).

Position 259 (glutamate 259) interacts with Mg(2+).

This sequence belongs to the class-II aminoacyl-tRNA synthetase family. Phe-tRNA synthetase alpha subunit type 1 subfamily. As to quaternary structure, tetramer of two alpha and two beta subunits. It depends on Mg(2+) as a cofactor.

It is found in the cytoplasm. It catalyses the reaction tRNA(Phe) + L-phenylalanine + ATP = L-phenylalanyl-tRNA(Phe) + AMP + diphosphate + H(+). The chain is Phenylalanine--tRNA ligase alpha subunit from Mycobacterium tuberculosis (strain ATCC 25177 / H37Ra).